The primary structure comprises 186 residues: Elongation factor P (186 aa).

Belongs to the elongation factor P family.

Its subcellular location is the cytoplasm. The protein operates within protein biosynthesis; polypeptide chain elongation. In terms of biological role, involved in peptide bond synthesis. Stimulates efficient translation and peptide-bond synthesis on native or reconstituted 70S ribosomes in vitro. Probably functions indirectly by altering the affinity of the ribosome for aminoacyl-tRNA, thus increasing their reactivity as acceptors for peptidyl transferase. This chain is Elongation factor P, found in Brucella abortus (strain S19).